Consider the following 839-residue polypeptide: Small conductance calcium-activated potassium channel protein 2 (839 aa).

Disordered stretches follow at residues 1–33 (MPIV…QESP), 64–115 (QRGF…QQPG), 195–258 (ALRQ…RRES), and 280–375 (SNLS…KKNQ). Low complexity-rich tracts occupy residues 198-212 (QQYA…QYHQ) and 219-235 (ATSP…GPPL). Positions 236 to 253 (SHHHHHPHPAHHQHHQPQ) are enriched in basic residues. A compositionally biased stretch (low complexity) spans 313–326 (SSPSAAAAASSSAP). Residues 345-363 (GTGGGGSTGGGGGGSGHGS) show a composition bias toward gly residues. A helical membrane pass occupies residues 398 to 418 (ALIFGMFGIVVMVIETELSWG). Tyr420 is subject to Phosphotyrosine. A helical membrane pass occupies residues 428–448 (LALKCLISLSTIILLGLIIVY). Residues 474-494 (IFFICLEILVCAIHPIPGNYT) traverse the membrane as a helical segment. A helical transmembrane segment spans residues 516–536 (IILSIPMFLRLYLIARVMLLH). Residues 565–585 (LMTICPGTVLLVFSISLWIIA) traverse the membrane as a helical segment. Positions 605 to 625 (FLGAMWLISITFLSIGYGDMV) form an intramembrane region, pore-forming. The helical transmembrane segment at 634–654 (VCLLTGIMGAGCTALVVAVVA) threads the bilayer. Residues 672-748 (DTQLTKRVKN…LVDLAKTQNI (77 aa)) are calmodulin-binding. A compositionally biased stretch (basic and acidic residues) spans 810-819 (HVSYNAERSR). The tract at residues 810 to 839 (HVSYNAERSRSSSRRRRSSSTAPPTSSESS) is disordered. Positions 828–839 (SSTAPPTSSESS) are enriched in low complexity.

Belongs to the potassium channel KCNN family. KCa2.2/KCNN2 subfamily. As to quaternary structure, homodimer. Heteromultimer with KCNN1 and KCNN3. The complex is composed of 4 channel subunits each of which binds to a calmodulin subunit which regulates the channel activity through calcium-binding. Interacts (via N-terminal domain) with MPP2. In terms of tissue distribution, expressed in atrial and ventricular myocytes with higher levels in atrial myocytes (at protein level). Highly expressed in brain, liver and colon with low levels in kidney and testis. In colon, detected in smooth muscle cells.

It localises to the membrane. Its subcellular location is the cytoplasm. It is found in the myofibril. The protein localises to the sarcomere. The protein resides in the z line. It carries out the reaction K(+)(in) = K(+)(out). Inhibited by bee venom neurotoxin apamin. Inhibited by UCL 1684 and tetraethylammonium (TEA). Small conductance calcium-activated potassium channel that mediates the voltage-independent transmembrane transfer of potassium across the cell membrane through a constitutive interaction with calmodulin which binds the intracellular calcium allowing its opening. The current is characterized by a voltage-independent activation, an intracellular calcium concentration increase-dependent activation and a single-channel conductance of about 3 picosiemens. Also presents an inwardly rectifying current, thus reducing its already small outward conductance of potassium ions, which is particularly the case when the membrane potential displays positive values, above + 20 mV. The inward rectification could be due to a blockade of the outward current by intracellular divalent cations such as calcium and magnesium and could also be due to an intrinsic property of the channel pore, independent of intracellular divalent ions. There are three positively charged amino acids in the S6 transmembrane domain, close to the pore, that collectively control the conductance and rectification through an electrostatic mechanism. Additionally, electrostatic contributions from these residues also play an important role in determining the intrinsic open probability of the channel in the absence of calcium, affecting the apparent calcium affinity for activation. Forms an heteromeric complex with calmodulin, which is constitutively associated in a calcium-independent manner. Channel opening is triggered when calcium binds the calmodulin resulting in a rotary movement leading to the formation of the dimeric complex to open the gate. Plays a role in the repolarization phase of cardiac action potential. This is Small conductance calcium-activated potassium channel protein 2 from Mus musculus (Mouse).